A 274-amino-acid polypeptide reads, in one-letter code: Guanylyl cyclase 1 (274 aa).

As to quaternary structure, functions both as monomer and homooligomer. It depends on Mg(2+) as a cofactor.

It carries out the reaction GTP = 3',5'-cyclic GMP + diphosphate. The protein operates within nucleotide metabolism. Its function is as follows. Magnesium-dependent guanylyl cyclase that catalyzes the formation of guanosine 3',5'-cyclic monophosphate (cGMP) from guanosine 5'-triphosphate (GTP). Can also use ATP as substrate with a low activity. This is Guanylyl cyclase 1 from Arabidopsis thaliana (Mouse-ear cress).